A 258-amino-acid polypeptide reads, in one-letter code: Ribonuclease HII (258 aa).

The tract at residues 1 to 20 is disordered; it reads MRVAPSGGPPHHHAMIRATP. A compositionally biased stretch (basic residues) spans 10-20; that stretch reads PHHHAMIRATP. Residues 48 to 236 form the RNase H type-2 domain; the sequence is WPVAGCDEVG…VVAARERHRA (189 aa). A divalent metal cation-binding residues include D54, E55, and D145.

This sequence belongs to the RNase HII family. The cofactor is Mn(2+). Mg(2+) is required as a cofactor.

The protein localises to the cytoplasm. It carries out the reaction Endonucleolytic cleavage to 5'-phosphomonoester.. Functionally, endonuclease that specifically degrades the RNA of RNA-DNA hybrids. The protein is Ribonuclease HII of Nitrobacter winogradskyi (strain ATCC 25391 / DSM 10237 / CIP 104748 / NCIMB 11846 / Nb-255).